Here is a 329-residue protein sequence, read N- to C-terminus: Chloroplast envelope quinone oxidoreductase homolog (329 aa).

Arg-58 is a binding site for substrate.

The protein belongs to the zinc-containing alcohol dehydrogenase family. Quinone oxidoreductase subfamily. As to quaternary structure, homodimer or homotetramer. Transition to monomer upon NADPH binding. Interacts with calmodulin. Interacts with HP30-1, HP30-2 and HP20.

The protein resides in the plastid. It localises to the chloroplast inner membrane. Functionally, NADPH-dependent alpha,beta-unsaturated oxoene reductase reducing the double bond of medium-chain (C9) to long-chain (C18) reactive electrophile species deriving from poly-unsaturated fatty acid peroxides. The best substrates are 13-lipoxygenase-derived gamma-ketols, but is unable to reduce the double bond of short-chain alkenals and alkenones such as acrolein, crotonaldehyde, 3-buten-2-one, 4-hexen-3-one and trans-2-hexenal, or quinones such as duroquinone, decylubiquinone, coenzyme Q0, menadione, menaquinone and phylloquinone. Can use trans-2-nonenal, trans-3-decen-2-one, 4-hydroxynonenal, 12-oxo-10(E) dodecanoate (traumatin), 4-oxononenal, trans-1,3 diphenyl-2-propenone, trans-1,4-diphenyl-2-butene-1,4-dione, 9-oxo-12,13-epoxy-(10E)-octadecenoic acid (trans-EKODE-1b), 9-hydroxy-12-oxo-10(E)-octadecenoic acid, 9-Hydroxy-12-oxo-10(E),15(Z)-octadecadienoic acid and 9,13-dihydroxy-10-oxo-11-octadecenoic acid as substrates, but has no activity with 13(R,S)-hydroperoxy-9(Z),11(E)-octadecadienoic acid (13-HPOD), 9(S),12(S),13(S)-trihydroxy-10(E)-octadecenoic acid, 13-hydroxy-12-oxo-9(Z)-octadecenoic acid, 9-oxo-10(E),12(Z)-octadecadienoic acid (9-KODE), 13-oxo-9(Z),11(E)-octadecadienoic acid (13-KODE) and 12-oxo-10,15(Z)-phytodienoic acid (12-OPDA). This chain is Chloroplast envelope quinone oxidoreductase homolog, found in Arabidopsis thaliana (Mouse-ear cress).